Here is a 799-residue protein sequence, read N- to C-terminus: Elongation factor G, mitochondrial (799 aa).

A mitochondrion-targeting transit peptide spans 1–34; it reads MRCPSLTRLPYRAVSGLPRSVVRLQSQNFLTRRC. The 288-residue stretch at 97-384 folds into the tr-type G domain; that stretch reads SRVRNIGIAA…GVVDYLPNPA (288 aa). Residues 106-113, 182-186, and 236-239 contribute to the GTP site; these read AHIDSGKT, DTPGH, and NKMD.

This sequence belongs to the TRAFAC class translation factor GTPase superfamily. Classic translation factor GTPase family. EF-G/EF-2 subfamily.

It is found in the mitochondrion. It participates in protein biosynthesis; polypeptide chain elongation. Mitochondrial GTPase that catalyzes the GTP-dependent ribosomal translocation step during translation elongation. During this step, the ribosome changes from the pre-translocational (PRE) to the post-translocational (POST) state as the newly formed A-site-bound peptidyl-tRNA and P-site-bound deacylated tRNA move to the P and E sites, respectively. Catalyzes the coordinated movement of the two tRNA molecules, the mRNA and conformational changes in the ribosome. This chain is Elongation factor G, mitochondrial (mef1), found in Aspergillus flavus (strain ATCC 200026 / FGSC A1120 / IAM 13836 / NRRL 3357 / JCM 12722 / SRRC 167).